Reading from the N-terminus, the 360-residue chain is Photosystem II protein D1 2 (360 aa).

A run of 3 helical transmembrane segments spans residues 29–46 (YVGW…TATI), 118–133 (HFLI…EWEL), and 142–156 (WICV…AATA). His-118 contacts chlorophyll a. Tyr-126 contacts pheophytin a. [CaMn4O5] cluster-binding residues include Asp-170 and Glu-189. A helical membrane pass occupies residues 197–218 (FHMLGVAGVFGGSLFSAMHGSL). Residue His-198 coordinates chlorophyll a. A quinone-binding positions include His-215 and 264 to 265 (SF). Residue His-215 coordinates Fe cation. His-272 is a Fe cation binding site. Residues 274-288 (FLAAWPVVGIWFTSL) form a helical membrane-spanning segment. His-332, Glu-333, Asp-342, and Ala-344 together coordinate [CaMn4O5] cluster. The propeptide occupies 345–360 (AGEATPVALTAPAING).

It belongs to the reaction center PufL/M/PsbA/D family. In terms of assembly, PSII is composed of 1 copy each of membrane proteins PsbA, PsbB, PsbC, PsbD, PsbE, PsbF, PsbH, PsbI, PsbJ, PsbK, PsbL, PsbM, PsbT, PsbX, PsbY, PsbZ, Psb30/Ycf12, peripheral proteins PsbO, CyanoQ (PsbQ), PsbU, PsbV and a large number of cofactors. It forms dimeric complexes. The D1/D2 heterodimer binds P680, chlorophylls that are the primary electron donor of PSII, and subsequent electron acceptors. It shares a non-heme iron and each subunit binds pheophytin, quinone, additional chlorophylls, carotenoids and lipids. D1 provides most of the ligands for the Mn4-Ca-O5 cluster of the oxygen-evolving complex (OEC). There is also a Cl(-1) ion associated with D1 and D2, which is required for oxygen evolution. The PSII complex binds additional chlorophylls, carotenoids and specific lipids. is required as a cofactor. Tyr-161 forms a radical intermediate that is referred to as redox-active TyrZ, YZ or Y-Z. In terms of processing, C-terminally processed by CtpA; processing is essential to allow assembly of the oxygen-evolving complex and thus photosynthetic growth.

The protein localises to the cellular thylakoid membrane. It carries out the reaction 2 a plastoquinone + 4 hnu + 2 H2O = 2 a plastoquinol + O2. Functionally, photosystem II (PSII) is a light-driven water:plastoquinone oxidoreductase that uses light energy to abstract electrons from H(2)O, generating O(2) and a proton gradient subsequently used for ATP formation. It consists of a core antenna complex that captures photons, and an electron transfer chain that converts photonic excitation into a charge separation. The D1/D2 (PsbA/PsbD) reaction center heterodimer binds P680, the primary electron donor of PSII as well as several subsequent electron acceptors. In Synechococcus elongatus (strain ATCC 33912 / PCC 7942 / FACHB-805) (Anacystis nidulans R2), this protein is Photosystem II protein D1 2.